We begin with the raw amino-acid sequence, 403 residues long: MSSLSNASHLMEDVQGIRKAQRADGTATVMAIGTAHPPHIFPQDTYADFYFRATNSEHKVELKKKFDRICKKTMIGKRYFNYDEEFLKKYPNITSFDEPSLNDRQDICVPGVPALGAEAAVKAIAEWGRPKSEITHLVFCTSCGVDMPSADFQCAKLLGLRTNVNKYCVYMQGCYAGGTVMRYAKDLAENNRGARVLVVCAELTIIGLRGPNESHLDNAIGNSLFGDGAAALIVGSDPIIGVEKPMFEIVCAKQTVIPNSEDVIHLHMREAGLMFYMSKDSPETISNNVEACLVDVFKSVGMTPPEDWNSLFWIPHPGGRAILDQVEAKLKLRPEKFRATRTVLWDCGNMVSACVLYILDEMRRKSADEGLETYGEGLEWGVLLGFGPGMTVETILLHSLPLM.

Residue Cys-174 is part of the active site. CoA is bound by residues Ser-281 and 318-321; that span reads GGRA.

The protein belongs to the thiolase-like superfamily. Chalcone/stilbene synthases family. In terms of assembly, homodimer.

The protein operates within secondary metabolite biosynthesis; flavonoid biosynthesis. In terms of biological role, catalyzes the iterative condensations of 8 molecules of malonyl-CoA to produce aromatic octaketides, SEK4 and SEK4b, the products of the minimal polyketide synthase for the benzoisochromanequinone actinorhodin. May be involved in the biosynthesis of the octaketide barbaloin. The polypeptide is Octaketide synthase 1 (Aloe arborescens (Kidachi aloe)).